The following is a 142-amino-acid chain: Large-conductance mechanosensitive channel (142 aa).

The next 2 helical transmembrane spans lie at 14–34 and 86–106; these read VVDL…VSSL and FGQF…VFLV.

It belongs to the MscL family. As to quaternary structure, homopentamer.

The protein resides in the cell inner membrane. Its function is as follows. Channel that opens in response to stretch forces in the membrane lipid bilayer. May participate in the regulation of osmotic pressure changes within the cell. The protein is Large-conductance mechanosensitive channel of Rhizorhabdus wittichii (strain DSM 6014 / CCUG 31198 / JCM 15750 / NBRC 105917 / EY 4224 / RW1) (Sphingomonas wittichii).